The following is a 447-amino-acid chain: Serine/threonine-protein phosphatase 2A 55 kDa regulatory subunit B alpha isoform (447 aa).

An N-acetylalanine modification is found at Ala2. WD repeat units lie at residues 11-80 (QWCF…FQSH), 94-174 (EKIN…IFAN), 175-218 (AHTY…VDIK), 227-270 (EVIT…KLFE), 288-325 (ISDVKFSHSGRYMMTRDYLSVKVWDLNMENRPVETYQV), 347-381 (ECCWNGSDSVVMTGSYNNFFRMFDRNTKRDITLEA), and 414-446 (DFNKKILHTAWHPKENIIAVATTNNLYIFQDKV).

The protein belongs to the phosphatase 2A regulatory subunit B family. PP2A consists of a common heterodimeric core enzyme, composed of a 36 kDa catalytic subunit (subunit C) and a 65 kDa constant regulatory subunit (PR65 or subunit A), that associates with a variety of regulatory subunits. Proteins that associate with the core dimer include three families of regulatory subunits B (the R2/B/PR55/B55, R3/B''/PR72/PR130/PR59 and R5/B'/B56 families), the 48 kDa variable regulatory subunit, viral proteins, and cell signaling molecules. Interacts with the PP2A C catalytic subunit PPP2CA. Interacts with the PP2A A subunit PPP2R1A. Found in a complex with at least ARL2, PPP2CB, PPP2R1A, PPP2R2A, PPP2R5E and TBCD. Interacts with MFHAS1; the interaction is direct. Interacts with PABIR1/FAM122A (via its N-terminus); the interaction is direct and inhibits PP2A activity. Interacts with ARPP19; the interaction is direct and inhibits PP2A activity. Interacts with CRTC3. As to expression, brain.

Substrate-recognition subunit of protein phosphatase 2A (PP2A) that plays a key role in cell cycle by controlling mitosis entry and exit. Involved in chromosome clustering during late mitosis by mediating dephosphorylation of MKI67. Essential for serine/threonine-protein phosphatase 2A-mediated dephosphorylation of WEE1, preventing its ubiquitin-mediated proteolysis, increasing WEE1 protein levels, and promoting the G2/M checkpoint. This chain is Serine/threonine-protein phosphatase 2A 55 kDa regulatory subunit B alpha isoform (Ppp2r2a), found in Rattus norvegicus (Rat).